Consider the following 313-residue polypeptide: Curved DNA-binding protein (313 aa).

A J domain is found at 5 to 69; sequence DYYKILGVSR…EKRKAYDAIG (65 aa). Residues 71–93 are disordered; it reads GWKQGQGFTPPPGWESRPGGEGV.

The protein localises to the cytoplasm. It is found in the nucleoid. In terms of biological role, DNA-binding protein that preferentially recognizes a curved DNA sequence. It is probably a functional analog of DnaJ; displays overlapping activities with DnaJ, but functions under different conditions, probably acting as a molecular chaperone in an adaptive response to environmental stresses other than heat shock. Lacks autonomous chaperone activity; binds native substrates and targets them for recognition by DnaK. Its activity is inhibited by the binding of CbpM. The polypeptide is Curved DNA-binding protein (Coxiella burnetii (strain Dugway 5J108-111)).